Reading from the N-terminus, the 93-residue chain is MDKSMLGDLDGLPEEDKMRMAAMVDQLQIRDSLRMYNSLVERCFTDCVDTFRRKTLDKQEESCVRRCAEKFLKHSMRVGMRFAELNQGVATPD.

A Twin CX3C motif motif is present at residues 43-67 (CFTDCVDTFRRKTLDKQEESCVRRC). Intrachain disulfides connect C43–C67 and C47–C63.

Belongs to the small Tim family. As to quaternary structure, heterohexamer; composed of 3 copies of TIM9 and 3 copies of TIM10, named soluble 70 kDa complex. The complex associates with the TIM22 component of the TIM22 complex. Interacts with multi-pass transmembrane proteins in transit.

It is found in the mitochondrion inner membrane. Its function is as follows. Mitochondrial intermembrane chaperone that participates in the import and insertion of multi-pass transmembrane proteins into the mitochondrial inner membrane. May also be required for the transfer of beta-barrel precursors from the TOM complex to the sorting and assembly machinery (SAM complex) of the outer membrane. Acts as a chaperone-like protein that protects the hydrophobic precursors from aggregation and guide them through the mitochondrial intermembrane space. The polypeptide is Mitochondrial import inner membrane translocase subunit Tim9 (TIM9) (Oryza sativa subsp. japonica (Rice)).